The following is an 810-amino-acid chain: RING finger protein unkempt homolog (810 aa).

The tract at residues 1-24 (MSKGPGPGGSAASSAPPAATAQVL) is disordered. Positions 10-19 (SAASSAPPAA) are enriched in low complexity. 5 C3H1-type zinc fingers span residues 84–113 (YSPD…HRTT), 124–154 (YYKT…HGPH), 215–241 (NYKT…HNSK), 251–285 (KYRS…HTRT), and 293–321 (IYKS…HIEP). The disordered stretch occupies residues 239–265 (NSKDRRRSPRKHKYRSSPCPNVKHGDE). Ser-240 is modified (phosphoserine). The span at 241 to 253 (KDRRRSPRKHKYR) shows a compositional bias: basic residues. A phosphoserine mark is found at Ser-374, Ser-378, Ser-385, and Ser-394. A disordered region spans residues 478–497 (TSSLAATPPSPAGTNSTPGM). Ser-631 carries the phosphoserine modification. A coiled-coil region spans residues 643 to 727 (GAAELARLRQ…ERLHTVPEAQ (85 aa)). The RING-type; degenerate zinc-finger motif lies at 766–801 (SVKCLKCQEQTRAVLPCQHAVLCELCAEGSECPVCQ).

Belongs to the unkempt family.

It is found in the cytoplasm. Its function is as follows. Sequence-specific RNA-binding protein which plays an important role in the establishment and maintenance of the early morphology of cortical neurons during embryonic development. Acts as a translation repressor and controls a translationally regulated cell morphology program to ensure proper structuring of the nervous system. Translational control depends on recognition of its binding element within target mRNAs which consists of a mandatory UAG trimer upstream of a U/A-rich motif. Associated with polysomes. The polypeptide is RING finger protein unkempt homolog (Unk) (Mus musculus (Mouse)).